Reading from the N-terminus, the 519-residue chain is Cytochrome P450 monooxygenase FPY7 (519 aa).

Residues 12–34 traverse the membrane as a helical segment; it reads SLSLRWKIIVTLLAIYTLRIIGT. Cys465 lines the heme pocket.

Belongs to the cytochrome P450 family. It depends on heme as a cofactor.

It is found in the membrane. It participates in secondary metabolite biosynthesis. Functionally, cytochrome P450 monooxygenase; part of the gene cluster that mediates the biosynthesis of the gamma-pyrones fusapyrone (FPY) and deoxyfusapyrone (dFPY). FPY is an undecaketide and thus likely synthesized by the polyketide synthase FPY1 from acetyl-CoA functioning as starter unit and the addition of 10 malonyl-CoA extender units by successive Claisen-condensations. Next to this, FPY shares some rare features: C-glycosylated 4-deoxyglucose at C-3, a gem-dimethyl group at C-13, and an alpha-beta to beta-gamma double bond shift at C-20. During FPY biosynthesis mono-C-methyl groups are transferred to the tetra-, penta-, hexa- and heptaketide, while two C-methyl groups are transferred to the nonaketide, suggesting that the CMet domain is programmed to selectively catalyze two successive C-alpha-methylation reactions of the nonaketide, while other alpha-carbons are non- or mono-methylated only. While the origin of the 4'-deoxyglucose moiety remains opaque, its transfer to C-3 is most likely mediated by the C-glycosyltransferase FPY2. Next to this, the hydroxyl group present at C-33 and discriminating between FPY and dFPY, is likely to be installed by the cytochrome P450 monooxygenase FPY7. No putative function can be predicted for the remaining genes FPY3-FPY6. In Fusarium mangiferae (Mango malformation disease fungus), this protein is Cytochrome P450 monooxygenase FPY7.